The chain runs to 257 residues: Small ribosomal subunit protein uS15m (257 aa).

The transit peptide at 1-57 (MLRAAWRALSSVRVQAVTQAPVPALRARSSASLPSARCGLQTPSLLNAARAYAVQKP) directs the protein to the mitochondrion. The segment at 228–257 (KAAAAAAKKEKRERVPENPSNALPEKTKEN) is disordered. Positions 234–243 (AKKEKRERVP) are enriched in basic and acidic residues.

It belongs to the universal ribosomal protein uS15 family. In terms of assembly, component of the mitochondrial ribosome small subunit (28S) which comprises a 12S rRNA and about 30 distinct proteins. Interacts with METTL17.

The protein localises to the mitochondrion matrix. The sequence is that of Small ribosomal subunit protein uS15m (Mrps15) from Rattus norvegicus (Rat).